Consider the following 2179-residue polypeptide: Genome polyprotein (2179 aa).

Residues Arg763–Asp765 carry the Cell attachment site motif. The region spanning Leu786–His881 is the LRAT domain. His796 (for protein 2A H-NC) is an active-site residue. Cys865 functions as the For protein 2A H-NC; Acyl-thioester intermediate in the catalytic mechanism. In terms of domain architecture, SF3 helicase spans Phe1156 to Asn1317. Gly1184–Ser1191 contributes to the ATP binding site. Tyr1493 is subject to O-(5'-phospho-RNA)-tyrosine. The region spanning Ala1517–Met1707 is the Peptidase C3 domain. Catalysis depends on for protease 3C activity residues His1557, Asp1595, and Cys1669. Residue Cys1896 is the Acyl-thioester intermediate of the active site. The region spanning Asp1944–Arg2058 is the RdRp catalytic domain. 2 residues coordinate Mg(2+): Asp1950 and Asp2044.

Belongs to the picornaviruses polyprotein family. As to quaternary structure, interacts with capsid protein VP1 and capsid protein VP3 to form heterotrimeric protomers. Five protomers subsequently associate to form pentamers which serve as building blocks for the capsid. Interacts with capsid protein VP0, and capsid protein VP3 to form heterotrimeric protomers. Five protomers subsequently associate to form pentamers which serve as building blocks for the capsid. In terms of assembly, interacts with capsid protein VP0 and capsid protein VP1 to form heterotrimeric protomers. Five protomers subsequently associate to form pentamers which serve as building blocks for the capsid. As to quaternary structure, homohexamer; forms a hexameric ring structure with 6-fold symmetry characteristic of AAA+ ATPases. Homodimer. Interacts with host ACBD3. In terms of assembly, interacts with RNA-directed RNA polymerase. As to quaternary structure, interacts with Viral protein genome-linked. Mg(2+) serves as cofactor. VPg is uridylylated by the polymerase and is covalently linked to the 5'-end of genomic RNA. This uridylylated form acts as a nucleotide-peptide primer for the polymerase. In terms of processing, specific enzymatic cleavages yield mature proteins. All cleavages are catalyzed by P3C.

It is found in the virion. The protein resides in the host cytoplasm. It localises to the host nucleus. Its subcellular location is the host nucleolus. The protein localises to the host cytoplasmic vesicle membrane. It catalyses the reaction RNA(n) + a ribonucleoside 5'-triphosphate = RNA(n+1) + diphosphate. The catalysed reaction is a ribonucleoside 5'-triphosphate + H2O = a ribonucleoside 5'-diphosphate + phosphate + H(+). The enzyme catalyses Selective cleavage of Gln-|-Gly bond in the poliovirus polyprotein. In other picornavirus reactions Glu may be substituted for Gln, and Ser or Thr for Gly.. Functionally, forms an icosahedral capsid of pseudo T=3 symmetry together with capsid proteins VP1 and VP3. The capsid is 300 Angstroms in diameter, composed of 60 copies of each capsid protein and enclosing the viral positive strand RNA genome. Capsid proteins interact with host alpha-V/beta-3 integrin heterodimer to provide virion attachment target cell. This attachment induces virion internalization predominantly through clathrin-mediated endocytosis. Binds packaging signals present in the viral RNA. Forms an icosahedral capsid of pseudo T=3 symmetry together with capsid proteins VP0 and VP1. The capsid is 300 Angstroms in diameter, composed of 60 copies of each capsid protein and enclosing the viral positive strand RNA genome. Capsid proteins interact with host alpha-V/beta-3 integrin heterodimer to provide virion attachment target cell. This attachment induces virion internalization predominantly through clathrin-mediated endocytosis. Binds packaging signals present in the viral RNA. Its function is as follows. Forms an icosahedral capsid of pseudo T=3 symmetry together with capsid proteins VP0 and VP3. The capsid is 300 Angstroms in diameter, composed of 60 copies of each capsid protein and enclosing the viral positive strand RNA genome. Capsid proteins interact with host alpha-V/beta-3 integrin heterodimer to provide virion attachment target cell. This attachment induces virion internalization predominantly through clathrin-mediated endocytosis. Binds packaging signals present in the viral RNA. In terms of biological role, is not a protease. Functionally, plays an essential role in the virus replication cycle by acting as a viroporin. Creates a pore in the host endoplasmic reticulum and as a consequence releases Ca2+ in the cytoplasm of infected cell. In turn, high levels of cytoplasmic calcium may trigger membrane trafficking and transport of viral ER-associated proteins to viroplasms, sites of viral genome replication. Induces and associates with structural rearrangements of intracellular membranes. Displays RNA-binding, nucleotide binding and NTPase activities. May play a role in virion morphogenesis and viral RNA encapsidation by interacting with the capsid protein VP3. Its function is as follows. Localizes the viral replication complex to the surface of membranous vesicles. It inhibits host cell endoplasmic reticulum-to-Golgi apparatus transport and causes the disassembly of the Golgi complex, possibly through GBF1 interaction. This would result in depletion of MHC, trail receptors and IFN receptors at the host cell surface. Plays an essential role in viral RNA replication by recruiting ACBD3 and PI4KB at the viral replication sites, thereby allowing the formation of the rearranged membranous structures where viral replication takes place. In terms of biological role, acts as a primer for viral RNA replication and remains covalently bound to viral genomic RNA. VPg is uridylylated prior to priming replication into VPg-pUpU. The VPg-pUpU is then used as primer on the genomic RNA poly(A) by the RNA-dependent RNA polymerase to replicate the viral genome. Following genome release from the infecting virion in the cytoplasm, the VPg-RNA linkage is probably removed by host TDP2. During the late stage of the replication cycle, host TDP2 is excluded from sites of viral RNA synthesis and encapsidation, allowing for the generation of progeny virions. Functionally, cysteine protease that generates mature viral proteins from the precursor polyprotein. In addition to its proteolytic activity, it binds to viral RNA, and thus influences viral genome replication. RNA and substrate bind cooperatively to the protease. Replicates the viral genomic RNA on the surface of intracellular membranes. Covalently attaches UMP to a tyrosine of VPg, which is used to prime RNA synthesis. The positive stranded RNA genome is first replicated at virus induced membranous vesicles, creating a dsRNA genomic replication form. This dsRNA is then used as template to synthesize positive stranded RNA genomes. ss(+)RNA genomes are either translated, replicated or encapsidated. In Human parechovirus 2 (strain Williamson) (HPeV-2), this protein is Genome polyprotein.